Here is a 364-residue protein sequence, read N- to C-terminus: DNA replication and repair protein RecF (364 aa).

An ATP-binding site is contributed by 30–37 (GDNAQGKT).

It belongs to the RecF family.

It localises to the cytoplasm. Functionally, the RecF protein is involved in DNA metabolism; it is required for DNA replication and normal SOS inducibility. RecF binds preferentially to single-stranded, linear DNA. It also seems to bind ATP. The chain is DNA replication and repair protein RecF from Clostridium kluyveri (strain ATCC 8527 / DSM 555 / NBRC 12016 / NCIMB 10680 / K1).